Here is a 146-residue protein sequence, read N- to C-terminus: uncharacterized protein (146 aa).

Positions 1–137 (MLSQEFFNSF…TINVMNQIHK (137 aa)) constitute an HTH marR-type domain.

This is an uncharacterized protein from Staphylococcus aureus (strain MW2).